Reading from the N-terminus, the 678-residue chain is Glycine--tRNA ligase beta subunit (678 aa).

Belongs to the class-II aminoacyl-tRNA synthetase family. In terms of assembly, tetramer of two alpha and two beta subunits.

The protein localises to the cytoplasm. It catalyses the reaction tRNA(Gly) + glycine + ATP = glycyl-tRNA(Gly) + AMP + diphosphate. The sequence is that of Glycine--tRNA ligase beta subunit from Streptococcus suis (strain 98HAH33).